Reading from the N-terminus, the 180-residue chain is Shikimate kinase (180 aa).

ATP is bound at residue 14 to 19; sequence GAGKSS. Position 18 (Ser18) interacts with Mg(2+). Asp36, Arg60, and Gly82 together coordinate substrate. Arg120 serves as a coordination point for ATP. Residue Arg139 participates in substrate binding.

This sequence belongs to the shikimate kinase family. As to quaternary structure, monomer. It depends on Mg(2+) as a cofactor.

It localises to the cytoplasm. The catalysed reaction is shikimate + ATP = 3-phosphoshikimate + ADP + H(+). The protein operates within metabolic intermediate biosynthesis; chorismate biosynthesis; chorismate from D-erythrose 4-phosphate and phosphoenolpyruvate: step 5/7. Catalyzes the specific phosphorylation of the 3-hydroxyl group of shikimic acid using ATP as a cosubstrate. This Xylella fastidiosa (strain M12) protein is Shikimate kinase.